The sequence spans 414 residues: Histidine--tRNA ligase (414 aa).

The protein belongs to the class-II aminoacyl-tRNA synthetase family. Homodimer.

It is found in the cytoplasm. The enzyme catalyses tRNA(His) + L-histidine + ATP = L-histidyl-tRNA(His) + AMP + diphosphate + H(+). The chain is Histidine--tRNA ligase from Rickettsia africae (strain ESF-5).